A 332-amino-acid polypeptide reads, in one-letter code: Flotillin-like protein FloA (332 aa).

The chain crosses the membrane as a helical span at residues 9–29 (FILIGGGIIFVVLFFHYVPFF).

The protein belongs to the flotillin-like FloA family. As to quaternary structure, homooligomerizes.

The protein localises to the cell membrane. The protein resides in the membrane raft. Its function is as follows. Found in functional membrane microdomains (FMM) that may be equivalent to eukaryotic membrane rafts. FMMs are highly dynamic and increase in number as cells age. Flotillins are thought to be important factors in membrane fluidity. The protein is Flotillin-like protein FloA of Phocaeicola vulgatus (strain ATCC 8482 / DSM 1447 / JCM 5826 / CCUG 4940 / NBRC 14291 / NCTC 11154) (Bacteroides vulgatus).